A 266-amino-acid polypeptide reads, in one-letter code: UPF0294 protein YafD (266 aa).

Belongs to the UPF0294 family.

It localises to the cytoplasm. This is UPF0294 protein YafD from Salmonella dublin (strain CT_02021853).